Consider the following 504-residue polypeptide: L-carnitine/gamma-butyrobetaine antiporter (504 aa).

12 consecutive transmembrane segments (helical) span residues 10–30 (IEPKVFFPPLIIVGILCWLTV), 51–71 (WGWAFEWYMVVMLFGWFWLVF), 92–112 (IFMMFASCTSAAVLFWGSIEI), 143–163 (GPLPWATYSFLSVAFAYFFFV), 195–215 (FYLVALIFAMGTSLGLATPLV), 231–251 (LDAIIITCWIILNAICVACGL), 263–283 (SYLSFLMLGWVFIVSGASFIM), 316–336 (WTVFYWAWWVIYAIQMSIFLA), 347–367 (LCFGMVLGLTASTWILWTVLG), 398–418 (WAALPLSTATMWGFFILCFIA), 446–466 (LLVRIGWSVLVGIIGIVLLAL), and 475–495 (AIIAGGCPLFFVNIMVTLSFI).

The protein belongs to the BCCT transporter (TC 2.A.15) family. CaiT subfamily. Homotrimer.

The protein resides in the cell inner membrane. It catalyses the reaction 4-(trimethylamino)butanoate(in) + (R)-carnitine(out) = 4-(trimethylamino)butanoate(out) + (R)-carnitine(in). It participates in amine and polyamine metabolism; carnitine metabolism. Catalyzes the exchange of L-carnitine for gamma-butyrobetaine. The chain is L-carnitine/gamma-butyrobetaine antiporter from Escherichia coli O6:K15:H31 (strain 536 / UPEC).